Here is an 84-residue protein sequence, read N- to C-terminus: Small ribosomal subunit protein uS17 (84 aa).

Belongs to the universal ribosomal protein uS17 family. As to quaternary structure, part of the 30S ribosomal subunit.

Its function is as follows. One of the primary rRNA binding proteins, it binds specifically to the 5'-end of 16S ribosomal RNA. The chain is Small ribosomal subunit protein uS17 from Clostridium botulinum (strain Eklund 17B / Type B).